The chain runs to 324 residues: tRNA N6-adenosine threonylcarbamoyltransferase (324 aa).

The Fe cation site is built by H107, H111, and Y127. Substrate-binding positions include Y127 to G131, D159, G172, E176, and N257. D285 contacts Fe cation.

It belongs to the KAE1 / TsaD family. Monomer. Component of the KEOPS complex that consists of Kae1, Bud32, Cgi121 and Pcc1; the whole complex dimerizes. Fe(2+) serves as cofactor.

Its subcellular location is the cytoplasm. The catalysed reaction is L-threonylcarbamoyladenylate + adenosine(37) in tRNA = N(6)-L-threonylcarbamoyladenosine(37) in tRNA + AMP + H(+). Functionally, required for the formation of a threonylcarbamoyl group on adenosine at position 37 (t(6)A37) in tRNAs that read codons beginning with adenine. Is a component of the KEOPS complex that is probably involved in the transfer of the threonylcarbamoyl moiety of threonylcarbamoyl-AMP (TC-AMP) to the N6 group of A37. Kae1 likely plays a direct catalytic role in this reaction, but requires other protein(s) of the complex to fulfill this activity. The chain is tRNA N6-adenosine threonylcarbamoyltransferase from Pyrococcus horikoshii (strain ATCC 700860 / DSM 12428 / JCM 9974 / NBRC 100139 / OT-3).